Consider the following 479-residue polypeptide: NADH-quinone oxidoreductase subunit N 2 (479 aa).

The next 14 helical transmembrane spans lie at 9–29 (WALA…LLIV), 40–60 (LLLW…LMLA), 75–95 (RFAV…FFLS), 110–130 (YVLL…IDLL), 131–151 (SIYV…GFLR), 164–184 (VILG…IYGL), 206–226 (LLLA…AVPF), 238–258 (PTTI…AVIL), 272–292 (WIIV…VALV), 299–319 (LLAY…VAGG), 326–346 (VMLY…AVIM), 371–391 (ALLM…AGFF), 404–424 (GFVA…YFYI), and 449–469 (ATLA…AWFL).

It belongs to the complex I subunit 2 family. In terms of assembly, NDH-1 is composed of 14 different subunits. Subunits NuoA, H, J, K, L, M, N constitute the membrane sector of the complex.

The protein localises to the cell inner membrane. It carries out the reaction a quinone + NADH + 5 H(+)(in) = a quinol + NAD(+) + 4 H(+)(out). Functionally, NDH-1 shuttles electrons from NADH, via FMN and iron-sulfur (Fe-S) centers, to quinones in the respiratory chain. The immediate electron acceptor for the enzyme in this species is believed to be ubiquinone. Couples the redox reaction to proton translocation (for every two electrons transferred, four hydrogen ions are translocated across the cytoplasmic membrane), and thus conserves the redox energy in a proton gradient. The sequence is that of NADH-quinone oxidoreductase subunit N 2 from Rhizobium meliloti (strain 1021) (Ensifer meliloti).